A 323-amino-acid chain; its full sequence is Elongation factor P--(R)-beta-lysine ligase (323 aa).

74 to 76 contributes to the substrate binding site; that stretch reads SPE. ATP-binding positions include 98 to 100 and Asn107; that span reads RNE. Residue Tyr116 coordinates substrate. Position 242–243 (242–243) interacts with ATP; the sequence is EL. Glu249 provides a ligand contact to substrate. Position 298 (Gly298) interacts with ATP.

The protein belongs to the class-II aminoacyl-tRNA synthetase family. EpmA subfamily. As to quaternary structure, homodimer.

It carries out the reaction D-beta-lysine + L-lysyl-[protein] + ATP = N(6)-((3R)-3,6-diaminohexanoyl)-L-lysyl-[protein] + AMP + diphosphate + H(+). Functionally, with EpmB is involved in the beta-lysylation step of the post-translational modification of translation elongation factor P (EF-P). Catalyzes the ATP-dependent activation of (R)-beta-lysine produced by EpmB, forming a lysyl-adenylate, from which the beta-lysyl moiety is then transferred to the epsilon-amino group of a conserved specific lysine residue in EF-P. This is Elongation factor P--(R)-beta-lysine ligase from Photobacterium profundum (strain SS9).